A 482-amino-acid chain; its full sequence is Early growth response protein 4 (482 aa).

The interval 274-357 is disordered; it reads DLGEGAESLP…PPAKARRKGR (84 aa). The span at 280–290 shows a compositional bias: low complexity; sequence ESLPGLLTPPS. Over residues 291 to 302 the composition is skewed to gly residues; sequence GEGGSSGEGGEF. A compositionally biased stretch (pro residues) spans 337–349; sequence PEPPVPPPAPFPP. 3 consecutive C2H2-type zinc fingers follow at residues 376-400, 406-428, and 434-456; these read FACP…LRIH, FQCR…VRTH, and FACD…SKVH.

This sequence belongs to the EGR C2H2-type zinc-finger protein family. Expressed in brain. In the cerebellum and frontal cortex.

The protein resides in the nucleus. Its function is as follows. Transcriptional regulator. Recognizes and binds to the DNA sequence 5'-GCGGGGGCG-3' (GSG). Activates the transcription of target genes whose products are required for mitogenesis and differentiation. The chain is Early growth response protein 4 (EGR4) from Bos taurus (Bovine).